The chain runs to 110 residues: CHH-like protein (110 aa).

Positions 1–23 (MHLSSVQFAWAALVALAVSAAGA) are cleaved as a signal peptide. Residues 24–35 (LPSSAPHHVERR) constitute a propeptide that is removed on maturation. 3 disulfides stabilise this stretch: cysteine 42-cysteine 78, cysteine 58-cysteine 74, and cysteine 61-cysteine 87. The residue at position 107 (valine 107) is a Valine amide.

This sequence belongs to the arthropod CHH/MIH/GIH/VIH hormone family.

It is found in the secreted. In Bombyx mori (Silk moth), this protein is CHH-like protein (CHHL).